Reading from the N-terminus, the 78-residue chain is Translation initiation factor IF-1, chloroplastic (78 aa).

One can recognise an S1-like domain in the interval 1 to 72 (MKKQNLIDME…TKGRITYRLR (72 aa)).

This sequence belongs to the IF-1 family. As to quaternary structure, component of the 30S ribosomal translation pre-initiation complex which assembles on the 30S ribosome in the order IF-2 and IF-3, IF-1 and N-formylmethionyl-tRNA(fMet); mRNA recruitment can occur at any time during PIC assembly.

It localises to the plastid. The protein resides in the chloroplast. Its function is as follows. One of the essential components for the initiation of protein synthesis. Stabilizes the binding of IF-2 and IF-3 on the 30S subunit to which N-formylmethionyl-tRNA(fMet) subsequently binds. Helps modulate mRNA selection, yielding the 30S pre-initiation complex (PIC). Upon addition of the 50S ribosomal subunit IF-1, IF-2 and IF-3 are released leaving the mature 70S translation initiation complex. This is Translation initiation factor IF-1, chloroplastic from Physcomitrium patens (Spreading-leaved earth moss).